Here is a 352-residue protein sequence, read N- to C-terminus: Phosphate acyltransferase (352 aa).

This sequence belongs to the PlsX family. Homodimer. Probably interacts with PlsY.

It localises to the cytoplasm. The enzyme catalyses a fatty acyl-[ACP] + phosphate = an acyl phosphate + holo-[ACP]. It functions in the pathway lipid metabolism; phospholipid metabolism. Its function is as follows. Catalyzes the reversible formation of acyl-phosphate (acyl-PO(4)) from acyl-[acyl-carrier-protein] (acyl-ACP). This enzyme utilizes acyl-ACP as fatty acyl donor, but not acyl-CoA. The chain is Phosphate acyltransferase from Bordetella bronchiseptica (strain ATCC BAA-588 / NCTC 13252 / RB50) (Alcaligenes bronchisepticus).